The following is a 226-amino-acid chain: ATP-dependent dethiobiotin synthetase BioD (226 aa).

Position 13–18 (13–18) interacts with ATP; it reads DVGKTL. Mg(2+) is bound at residue Thr17. The active site involves Lys38. ATP is bound by residues Asp55, 117 to 120, 177 to 178, 206 to 208, and Glu213; these read EGAG, NR, and PFV. Asp55 and Glu117 together coordinate Mg(2+).

Belongs to the dethiobiotin synthetase family. As to quaternary structure, homodimer. Requires Mg(2+) as cofactor.

Its subcellular location is the cytoplasm. The catalysed reaction is (7R,8S)-7,8-diammoniononanoate + CO2 + ATP = (4R,5S)-dethiobiotin + ADP + phosphate + 3 H(+). It participates in cofactor biosynthesis; biotin biosynthesis; biotin from 7,8-diaminononanoate: step 1/2. Catalyzes a mechanistically unusual reaction, the ATP-dependent insertion of CO2 between the N7 and N8 nitrogen atoms of 7,8-diaminopelargonic acid (DAPA, also called 7,8-diammoniononanoate) to form a ureido ring. This chain is ATP-dependent dethiobiotin synthetase BioD, found in Aeromonas salmonicida (strain A449).